A 248-amino-acid polypeptide reads, in one-letter code: tRNA (guanine-N(1)-)-methyltransferase (248 aa).

S-adenosyl-L-methionine is bound by residues Gly-117 and 137–142; that span reads IGDFVL.

Belongs to the RNA methyltransferase TrmD family. As to quaternary structure, homodimer.

It localises to the cytoplasm. The enzyme catalyses guanosine(37) in tRNA + S-adenosyl-L-methionine = N(1)-methylguanosine(37) in tRNA + S-adenosyl-L-homocysteine + H(+). Its function is as follows. Specifically methylates guanosine-37 in various tRNAs. In Polynucleobacter asymbioticus (strain DSM 18221 / CIP 109841 / QLW-P1DMWA-1) (Polynucleobacter necessarius subsp. asymbioticus), this protein is tRNA (guanine-N(1)-)-methyltransferase.